We begin with the raw amino-acid sequence, 416 residues long: Serine hydroxymethyltransferase (416 aa).

Residues L121 and 125–127 (GHL) each bind (6S)-5,6,7,8-tetrahydrofolate. The residue at position 229 (K229) is an N6-(pyridoxal phosphate)lysine.

Belongs to the SHMT family. As to quaternary structure, homodimer. The cofactor is pyridoxal 5'-phosphate.

It is found in the cytoplasm. The enzyme catalyses (6R)-5,10-methylene-5,6,7,8-tetrahydrofolate + glycine + H2O = (6S)-5,6,7,8-tetrahydrofolate + L-serine. It functions in the pathway one-carbon metabolism; tetrahydrofolate interconversion. It participates in amino-acid biosynthesis; glycine biosynthesis; glycine from L-serine: step 1/1. Catalyzes the reversible interconversion of serine and glycine with tetrahydrofolate (THF) serving as the one-carbon carrier. This reaction serves as the major source of one-carbon groups required for the biosynthesis of purines, thymidylate, methionine, and other important biomolecules. Also exhibits THF-independent aldolase activity toward beta-hydroxyamino acids, producing glycine and aldehydes, via a retro-aldol mechanism. The sequence is that of Serine hydroxymethyltransferase from Azoarcus sp. (strain BH72).